We begin with the raw amino-acid sequence, 204 residues long: Outer-membrane lipoprotein LolB (204 aa).

The N-terminal stretch at 1–16 (MLRHLLVFSLIALLAG) is a signal peptide. A lipid anchor (N-palmitoyl cysteine) is attached at cysteine 17. Cysteine 17 is lipidated: S-diacylglycerol cysteine.

Belongs to the LolB family. As to quaternary structure, monomer.

It localises to the cell outer membrane. Plays a critical role in the incorporation of lipoproteins in the outer membrane after they are released by the LolA protein. This Ectopseudomonas mendocina (strain ymp) (Pseudomonas mendocina) protein is Outer-membrane lipoprotein LolB.